Consider the following 54-residue polypeptide: MFRRLTFAQLLFATVLGIAGGVYIFQPVFEQYAKDQKELKEKMQLVQESEEKKS.

The Mitochondrial intermembrane segment spans residues 1–4; it reads MFRR. A helical membrane pass occupies residues 5 to 25; sequence LTFAQLLFATVLGIAGGVYIF. The Cytoplasmic segment spans residues 26 to 54; it reads QPVFEQYAKDQKELKEKMQLVQESEEKKS. Residues 30–36 form a required for interaction with CLCC1 region; that stretch reads EQYAKDQ.

Homooligomer. Interacts (via C-terminus) with endoplasmic reticulum (ER) protein CLCC1; the interaction occurs at the mitochondria-associated ER membrane, a zone of contact between the ER and mitochondrial membranes, but does not appear to play a role in ER-mitochondria tethering and is not affected by ER stress.

The protein localises to the mitochondrion outer membrane. Its function is as follows. Plays a role in regulation of the unfolded protein response triggered by endoplasmic reticulum (ER) stress resulting from the presence of unfolded proteins in the ER lumen. The chain is Protein PIGBOS1 from Homo sapiens (Human).